The chain runs to 546 residues: Putative serine/threonine-protein kinase L268 (546 aa).

Residues 1-112 (MVCFSKYSGI…ILQTLDFHLV (112 aa)) enclose the Cyclin N-terminal domain. A Protein kinase domain is found at 260–544 (ITVVKNLGEG…QTLEEFNKFN (285 aa)). ATP-binding positions include 266–274 (LGEGTYGTV) and K287. Residue D389 is the Proton acceptor of the active site.

Belongs to the protein kinase superfamily. Ser/Thr protein kinase family.

The catalysed reaction is L-seryl-[protein] + ATP = O-phospho-L-seryl-[protein] + ADP + H(+). It catalyses the reaction L-threonyl-[protein] + ATP = O-phospho-L-threonyl-[protein] + ADP + H(+). This is Putative serine/threonine-protein kinase L268 from Acanthamoeba polyphaga mimivirus (APMV).